A 292-amino-acid polypeptide reads, in one-letter code: NAD kinase (292 aa).

D73 functions as the Proton acceptor in the catalytic mechanism. NAD(+) is bound by residues 73–74 (DG), 147–148 (NE), H158, R175, D177, 188–193 (TAYSLS), and Q247.

This sequence belongs to the NAD kinase family. A divalent metal cation serves as cofactor.

The protein resides in the cytoplasm. It catalyses the reaction NAD(+) + ATP = ADP + NADP(+) + H(+). Involved in the regulation of the intracellular balance of NAD and NADP, and is a key enzyme in the biosynthesis of NADP. Catalyzes specifically the phosphorylation on 2'-hydroxyl of the adenosine moiety of NAD to yield NADP. This Serratia proteamaculans (strain 568) protein is NAD kinase.